Consider the following 95-residue polypeptide: Small ribosomal subunit protein bS20 (95 aa).

Residues Met1–Lys22 form a disordered region. Over residues Arg12–Lys22 the composition is skewed to basic and acidic residues.

It belongs to the bacterial ribosomal protein bS20 family.

In terms of biological role, binds directly to 16S ribosomal RNA. The polypeptide is Small ribosomal subunit protein bS20 (Tropheryma whipplei (strain TW08/27) (Whipple's bacillus)).